Reading from the N-terminus, the 418-residue chain is Histidinol dehydrogenase (418 aa).

Tyr-119, Gln-180, and Asn-203 together coordinate NAD(+). Thr-226, Gln-248, and His-251 together coordinate substrate. Residues Gln-248 and His-251 each contribute to the Zn(2+) site. Catalysis depends on proton acceptor residues Glu-316 and His-317. Residues His-317, Asp-350, Glu-404, and His-409 each coordinate substrate. Asp-350 serves as a coordination point for Zn(2+). His-409 is a Zn(2+) binding site.

The protein belongs to the histidinol dehydrogenase family. The cofactor is Zn(2+).

The enzyme catalyses L-histidinol + 2 NAD(+) + H2O = L-histidine + 2 NADH + 3 H(+). It participates in amino-acid biosynthesis; L-histidine biosynthesis; L-histidine from 5-phospho-alpha-D-ribose 1-diphosphate: step 9/9. In terms of biological role, catalyzes the sequential NAD-dependent oxidations of L-histidinol to L-histidinaldehyde and then to L-histidine. The chain is Histidinol dehydrogenase from Staphylococcus aureus (strain COL).